We begin with the raw amino-acid sequence, 320 residues long: mRNA decay activator protein ZFP36 (320 aa).

The necessary for nuclear export stretch occupies residues 1–15 (MDLSAIYESLMSMSH). Residues 1 to 93 (MDLSAIYESL…PTSPTATPTT (93 aa)) are necessary and sufficient for the association with mRNA decay enzymes and mRNA decay activation. Necessary for localization of ARE-containing mRNAs to processing bodies (PBs) stretches follow at residues 1-167 (MDLS…DLAL) and 93-320 (TSSR…SVSE). The segment at 17–50 (LSPDHGGTESSGGLWNINSSDSIPSGVTSRLTGR) is disordered. A compositionally biased stretch (polar residues) spans 27 to 50 (SGGLWNINSSDSIPSGVTSRLTGR). S53 is subject to Phosphoserine; by MAPKAPK2. Phosphoserine is present on S59. The stretch at 64–68 (PPPPG) is one P-P-P-P-G repeat. Residues 66-85 (PPGFAPLAPRPGPELSPSPT) show a composition bias toward pro residues. The segment at 66 to 95 (PPGFAPLAPRPGPELSPSPTSPTATPTTSS) is disordered. S81 and S83 each carry phosphoserine. A Phosphothreonine modification is found at T85. A Phosphoserine modification is found at S86. The span at 86-95 (SPTATPTTSS) shows a compositional bias: low complexity. Positions 88–161 (TATPTTSSRY…GSRCHFIHNP (74 aa)) are necessary for nuclear localization. Residues 90–166 (TPTTSSRYKT…FIHNPTEDLA (77 aa)) are necessary for RNA-binding. C3H1-type zinc fingers lie at residues 96-124 (RYKTELCRTYSESGRCRYGAKCQFAHGPG) and 134-162 (KYKTELCHKFYLQGRCPYGSRCHFIHNPT). The necessary for interaction with PABPN1 stretch occupies residues 96 to 187 (RYKTELCRTY…ISFSGLPSGR (92 aa)). The segment at 167-320 (LPGQPHVLRQ…PIFNRISVSE (154 aa)) is necessary for mRNA decay activation. S179 is subject to Phosphoserine; by MAPKAPK2. A disordered region spans residues 180 to 310 (FSGLPSGRRT…PQPPAPPRRL (131 aa)). Position 190 is a phosphoserine (S190). The P-P-P-P-G repeat unit spans residues 191-195 (PPPPG). The segment covering 197–209 (SGPSLSSCSFSPS) has biased composition (low complexity). Residue S211 is modified to Phosphoserine. The P-P-P-P-G repeat unit spans residues 212-216 (PPPPG). Phosphoserine; by MAPK1; in vitro is present on S221. A Phosphothreonine modification is found at T251. Phosphoserine is present on residues S270 and S290. Residues 280-290 (SSGSSLGGSDS) show a composition bias toward low complexity. The segment covering 300–309 (PPQPPAPPRR) has biased composition (pro residues). Residues 306 to 320 (PPRRLPIFNRISVSE) are interaction with CNOT1. S317 carries the phosphoserine modification.

As to quaternary structure, associates with cytoplasmic CCR4-NOT and PAN2-PAN3 deadenylase complexes to trigger ARE-containing mRNA deadenylation and decay processes. Part of a mRNA decay activation complex at least composed of poly(A)-specific exoribonucleases CNOT6, EXOSC2 and XRN1 and mRNA-decapping enzymes DCP1A and DCP2. Associates with the RNA exosome complex. Interacts (via phosphorylated form) with 14-3-3 proteins; these interactions promote exclusion of ZFP36 from cytoplasmic stress granules in response to arsenite treatment in a MAPKAPK2-dependent manner and does not prevent CCR4-NOT deadenylase complex recruitment or ZFP36-induced ARE-containing mRNA deadenylation and decay processes. Interacts with 14-3-3 proteins; these interactions occur in response to rapamycin in an Akt-dependent manner. Interacts with AGO2 and AGO4. Interacts (via C-terminus) with CNOT1; this interaction occurs in a RNA-independent manner and induces mRNA deadenylation. Interacts (via N-terminus) with CNOT6. Interacts with CNOT6L. Interacts (via C-terminus) with CNOT7; this interaction occurs in a RNA-independent manner, induces mRNA deadenylation and is inhibited in a phosphorylation MAPKAPK2-dependent manner. Interacts (via unphosphorylated form) with CNOT8; this interaction occurs in a RNA-independent manner and is inhibited in a phosphorylation MAPKAPK2-dependent manner. Interacts with DCP1A. Interacts (via N-terminus) with DCP2. Interacts with EDC3. Interacts (via N-terminus) with EXOSC2. Interacts with heat shock 70 kDa proteins. Interacts with KHSRP; this interaction increases upon cytokine-induced treatment. Interacts with MAP3K4; this interaction enhances the association with SH3KBP1/CIN85. Interacts with MAPKAPK2; this interaction occurs upon skeletal muscle satellite cell activation. Interacts with NCL. Interacts with NUP214; this interaction increases upon lipopolysaccharide (LPS) stimulation. Interacts with PABPC1; this interaction occurs in a RNA-dependent manner. Interacts (via hypophosphorylated form) with PABPN1 (via RRM domain and C-terminal arginine-rich region); this interaction occurs in the nucleus in a RNA-independent manner, decreases in presence of single-stranded poly(A) RNA-oligomer and in a p38 MAPK-dependent-manner and inhibits nuclear poly(A) tail synthesis. Interacts with PAN2. Interacts (via C3H1-type zinc finger domains) with PKM. Interacts (via C3H1-type zinc finger domains) with nuclear RNA poly(A) polymerase. Interacts with PPP2CA; this interaction occurs in LPS-stimulated cells and induces ZFP36 dephosphorylation, and hence may promote ARE-containing mRNAs decay. Interacts (via C-terminus) with PRR5L (via C-terminus); this interaction may accelerate ZFP36-mediated mRNA decay during stress. Interacts (via C-terminus) with SFN; this interaction occurs in a phosphorylation-dependent manner. Interacts (via extreme C-terminal region) with SH3KBP1/CIN85 (via SH3 domains); this interaction enhances MAP3K4-induced phosphorylation of ZFP36 at Ser-59 and Ser-86 and does not alter neither ZFP36 binding to ARE-containing transcripts nor TNF-alpha mRNA decay. Interacts with XRN1. Interacts (via C-terminus and Ser-179 phosphorylated form) with YWHAB; this interaction occurs in a p38/MAPKAPK2-dependent manner, increases cytoplasmic localization of ZFP36 and protects ZFP36 from Ser-179 dephosphorylation by serine/threonine phosphatase 2A, and hence may be crucial for stabilizing ARE-containing mRNAs. Interacts (via phosphorylated form) with YWHAE. Interacts (via C-terminus) with YWHAG; this interaction occurs in a phosphorylation-dependent manner. Interacts with YWHAH; this interaction occurs in a phosphorylation-dependent manner. Interacts with YWHAQ; this interaction occurs in a phosphorylation-dependent manner. Interacts with (via C-terminus) YWHAZ; this interaction occurs in a phosphorylation-dependent manner. Does not interact with SH3KBP1. Interacts (via P-P-P-P-G repeats) with GIGYF2; the interaction is direct. Phosphorylated. Phosphorylation at serine and/or threonine residues occurs in a p38 MAPK- and MAPKAPK2-dependent manner. Phosphorylated by MAPKAPK2 at Ser-53 and Ser-179; phosphorylation increases its stability and cytoplasmic localization, promotes binding to 14-3-3 adapter proteins and inhibits the recruitment of cytoplasmic CCR4-NOT and PAN2-PAN3 deadenylase complexes to the mRNA decay machinery, thereby inhibiting ZFP36-induced ARE-containing mRNA deadenylation and decay processes. Phosphorylation by MAPKAPK2 does not impair ARE-containing RNA-binding. Phosphorylated in a MAPKAPK2- and p38 MAPK-dependent manner upon skeletal muscle satellite cell activation; this phosphorylation inhibits ZFP36-mediated mRNA decay activity, and hence stabilizes MYOD1 mRNA. Phosphorylated by MAPK1 upon mitogen stimulation. Phosphorylated at Ser-59 and Ser-86; these phosphorylations increase in a SH3KBP1-dependent manner. Phosphorylated at serine and threonine residues in a pyruvate kinase PKM- and p38 MAPK-dependent manner. Phosphorylation at Ser-53 may participate in the PKM-mediated degradation of ZFP36 in a p38 MAPK-dependent manner. Dephosphorylated by serine/threonine phosphatase 2A at Ser-179. Post-translationally, ubiquitinated; pyruvate kinase (PKM)-dependent ubiquitination leads to proteasomal degradation through a p38 MAPK signaling pathway.

The protein resides in the nucleus. It is found in the cytoplasm. The protein localises to the cytoplasmic granule. It localises to the P-body. Functionally, zinc-finger RNA-binding protein that destabilizes numerous cytoplasmic AU-rich element (ARE)-containing mRNA transcripts by promoting their poly(A) tail removal or deadenylation, and hence provide a mechanism for attenuating protein synthesis. Acts as an 3'-untranslated region (UTR) ARE mRNA-binding adapter protein to communicate signaling events to the mRNA decay machinery. Recruits deadenylase CNOT7 (and probably the CCR4-NOT complex) via association with CNOT1, and hence promotes ARE-mediated mRNA deadenylation. Also functions by recruiting components of the cytoplasmic RNA decay machinery to the bound ARE-containing mRNAs. Self regulates by destabilizing its own mRNA. Binds to 3'-UTR ARE of numerous mRNAs. Also binds to ARE of its own mRNA. Plays a role in anti-inflammatory responses; suppresses tumor necrosis factor (TNF)-alpha production by stimulating ARE-mediated TNF-alpha mRNA decay and several other inflammatory ARE-containing mRNAs in interferon (IFN)- and/or lipopolysaccharide (LPS)-induced macrophages. Also plays a role in the regulation of dendritic cell maturation at the post-transcriptional level, and hence operates as part of a negative feedback loop to limit the inflammatory response. Promotes ARE-mediated mRNA decay of hypoxia-inducible factor HIF1A mRNA during the response of endothelial cells to hypoxia. Positively regulates early adipogenesis of preadipocytes by promoting ARE-mediated mRNA decay of immediate early genes (IEGs). Negatively regulates hematopoietic/erythroid cell differentiation by promoting ARE-mediated mRNA decay of the transcription factor STAT5B mRNA. Plays a role in maintaining skeletal muscle satellite cell quiescence by promoting ARE-mediated mRNA decay of the myogenic determination factor MYOD1 mRNA. Also associates with and regulates the expression of non-ARE-containing target mRNAs at the post-transcriptional level, such as MHC class I mRNAs. Participates in association with argonaute RISC catalytic components in the ARE-mediated mRNA decay mechanism; assists microRNA (miRNA) targeting ARE-containing mRNAs. May also play a role in the regulation of cytoplasmic mRNA decapping; enhances decapping of ARE-containing RNAs, in vitro. Involved in the delivery of target ARE-mRNAs to processing bodies (PBs). In addition to its cytosolic mRNA-decay function, affects nuclear pre-mRNA processing. Negatively regulates nuclear poly(A)-binding protein PABPN1-stimulated polyadenylation activity on ARE-containing pre-mRNA during LPS-stimulated macrophages. Also involved in the regulation of stress granule (SG) and P-body (PB) formation and fusion. Plays a role in the regulation of keratinocyte proliferation, differentiation and apoptosis. Plays a role as a tumor suppressor by inhibiting cell proliferation in breast cancer cells. The chain is mRNA decay activator protein ZFP36 from Rattus norvegicus (Rat).